Consider the following 199-residue polypeptide: Glycerol-3-phosphate acyltransferase (199 aa).

5 helical membrane-spanning segments follow: residues 5-25, 56-76, 83-103, 118-138, and 141-161; these read VLTI…SAVL, SAAL…YLAF, IALG…IFFG, APIG…LVLV, and YSSF…WWLD.

The protein belongs to the PlsY family. In terms of assembly, probably interacts with PlsX.

Its subcellular location is the cell inner membrane. The catalysed reaction is an acyl phosphate + sn-glycerol 3-phosphate = a 1-acyl-sn-glycero-3-phosphate + phosphate. It participates in lipid metabolism; phospholipid metabolism. In terms of biological role, catalyzes the transfer of an acyl group from acyl-phosphate (acyl-PO(4)) to glycerol-3-phosphate (G3P) to form lysophosphatidic acid (LPA). This enzyme utilizes acyl-phosphate as fatty acyl donor, but not acyl-CoA or acyl-ACP. The protein is Glycerol-3-phosphate acyltransferase of Shewanella halifaxensis (strain HAW-EB4).